We begin with the raw amino-acid sequence, 678 residues long: RNA helicase NPH-II (678 aa).

Positions 175–351 (FTSWARRVPV…EFFAESVFVH (177 aa)) constitute a Helicase ATP-binding domain. ATP is bound at residue 188–195 (GDTGVGKT). Residues 300 to 303 (DEVH) carry the DEXH box motif. In terms of domain architecture, Helicase C-terminal spans 371–546 (PLNRFMYIEE…VFDLQLPEDL (176 aa)).

It belongs to the DEAD box helicase family. DEAH subfamily. In terms of assembly, monomer.

The protein localises to the virion. The enzyme catalyses ATP + H2O = ADP + phosphate + H(+). Its function is as follows. NTP-dependent helicase that catalyzes unidirectional unwinding of 3'tailed duplex RNAs and plays an important role during transcription of early mRNAs, presumably by preventing R-loop formation behind the elongating RNA polymerase. Might also play a role in the export of newly synthesized mRNA chains out of the core into the cytoplasm. Required for replication and propagation of viral particles. This Oryctolagus cuniculus (Rabbit) protein is RNA helicase NPH-II (OPG084).